A 239-amino-acid polypeptide reads, in one-letter code: Protein UL20 homolog (239 aa).

A run of 3 helical transmembrane segments spans residues Pro65–Ile81, Phe140–Val156, and Leu189–Val208.

Belongs to the alphaherpesvirinae UL20 family. In terms of assembly, interacts with gK (via N-terminus); this interaction plays a role in the coordinate transport of UL20 and gK to the trans-Golgi network (TGN), and is required for their cell surface expression. Interacts with gB.

The protein localises to the virion. It is found in the host cell membrane. It localises to the host endosome membrane. The protein resides in the host Golgi apparatus membrane. Its subcellular location is the host nucleus membrane. In terms of biological role, plays an essential role in egress of virus particles from the nucleus, cytoplasmic envelopment and virus-induced cell fusion. Forms a functional protein complex with gK and this interaction is absolutely essential for their coordinate intracellular transport, gK glycosylation, expression on host cell surface, and function. Together, they modulate gB-mediated virus-induced cell fusion and virion egress and therefore actively participate in these processes. The sequence is that of Protein UL20 homolog from Equus caballus (Horse).